The primary structure comprises 2202 residues: Activating signal cointegrator 1 complex subunit 3 (2202 aa).

The tract at residues 1 to 400 (MALPRLTGAL…RQRDADVEKI (400 aa)) is required for interaction with ASCC2. Ser12 carries the phosphoserine modification. Coiled-coil stretches lie at residues 18-79 (KQDN…AAKQ) and 328-356 (IQSEQEKQLMKQYRREEKRIARREKKAGE). A Helicase ATP-binding 1 domain is found at 486-669 (ETAYNTNENM…FLHVNPYIGL (184 aa)). 499-506 (APTGAGKT) is an ATP binding site. N6-acetyllysine is present on Lys572. Positions 611-614 (DEVH) match the DEVH box motif. Residues 728–914 (TVRTAMSLIE…GTVTNVEEAV (187 aa)) enclose the Helicase C-terminal 1 domain. Positions 978–1287 (STDLGRTASH…GAEAVCIINF (310 aa)) constitute an SEC63 1 domain. In terms of domain architecture, Helicase ATP-binding 2 spans 1336-1511 (HTLYHTDCNV…WLNIKQMGLF (176 aa)). 1349-1356 (APTGSGKT) is a binding site for ATP. Residues 1453–1456 (DEIH) carry the DEIH box motif. One can recognise a Helicase C-terminal 2 domain in the interval 1544-1739 (PAFQAIRSHS…VLSDHLNAEI (196 aa)). Positions 1812–2176 (PLTYGRIASY…LGLDQQYDIY (365 aa)) constitute an SEC63 2 domain. Residue Ser2195 is modified to Phosphoserine.

This sequence belongs to the helicase family. As to quaternary structure, identified in the ASCC complex that contains ASCC1, ASCC2 and ASCC3. Functions as scaffolding subunit that interacts directly with both ASCC1 and ASCC2. Interacts directly with ALKBH3, and thereby recruits ALKBH3 to the ASCC complex. Part of the ASC-1/TRIP4 complex, that contains TRIP4, ASCC1, ASCC2 and ASCC3. Part of the RQT (ribosome quality control trigger) complex, that contains ASCC2, ASCC3 and TRIP4. Associates with ribosomes; recruited to collided ribosomes. Interacts with ZCCHC4. Interacts with ZNF598. Interacts with RPS3. Ubiquitous.

It is found in the nucleus. The protein localises to the nucleus speckle. Its subcellular location is the cytoplasm. It localises to the cytosol. The enzyme catalyses Couples ATP hydrolysis with the unwinding of duplex DNA by translocating in the 3'-5' direction.. It carries out the reaction ATP + H2O = ADP + phosphate + H(+). Functionally, ATPase involved both in DNA repair and rescue of stalled ribosomes. 3'-5' DNA helicase involved in repair of alkylated DNA: promotes DNA unwinding to generate single-stranded substrate needed for ALKBH3, enabling ALKBH3 to process alkylated N3-methylcytosine (3mC) within double-stranded regions. Also involved in activation of the ribosome quality control (RQC) pathway, a pathway that degrades nascent peptide chains during problematic translation. Drives the splitting of stalled ribosomes that are ubiquitinated in a ZNF598-dependent manner, as part of the ribosome quality control trigger (RQT) complex. Part of the ASC-1 complex that enhances NF-kappa-B, SRF and AP1 transactivation. The sequence is that of Activating signal cointegrator 1 complex subunit 3 (ASCC3) from Homo sapiens (Human).